A 424-amino-acid chain; its full sequence is Serine hydroxymethyltransferase 2 (424 aa).

Residues Leu125 and Gly129–Leu131 each bind (6S)-5,6,7,8-tetrahydrofolate. Lys234 bears the N6-(pyridoxal phosphate)lysine mark. Glu250 contacts (6S)-5,6,7,8-tetrahydrofolate.

This sequence belongs to the SHMT family. Homodimer. Requires pyridoxal 5'-phosphate as cofactor.

Its subcellular location is the cytoplasm. It carries out the reaction (6R)-5,10-methylene-5,6,7,8-tetrahydrofolate + glycine + H2O = (6S)-5,6,7,8-tetrahydrofolate + L-serine. It functions in the pathway one-carbon metabolism; tetrahydrofolate interconversion. Its pathway is amino-acid biosynthesis; glycine biosynthesis; glycine from L-serine: step 1/1. Its function is as follows. Catalyzes the reversible interconversion of serine and glycine with tetrahydrofolate (THF) serving as the one-carbon carrier. This reaction serves as the major source of one-carbon groups required for the biosynthesis of purines, thymidylate, methionine, and other important biomolecules. Also exhibits THF-independent aldolase activity toward beta-hydroxyamino acids, producing glycine and aldehydes, via a retro-aldol mechanism. This chain is Serine hydroxymethyltransferase 2, found in Burkholderia mallei (strain ATCC 23344).